The chain runs to 234 residues: Sugar fermentation stimulation protein A (234 aa).

A DNA-binding region (H-T-H motif) is located at residues leucine 201–serine 220.

It belongs to the SfsA family.

In terms of biological role, binds to DNA non-specifically. Could be a regulatory factor involved in maltose metabolism. This Salmonella arizonae (strain ATCC BAA-731 / CDC346-86 / RSK2980) protein is Sugar fermentation stimulation protein A.